A 199-amino-acid polypeptide reads, in one-letter code: Ribonuclease HII (199 aa).

An RNase H type-2 domain is found at 11 to 199 (SRVAGVDEVG…RRSFLRRLLG (189 aa)). Positions 17, 18, and 113 each coordinate a divalent metal cation.

Belongs to the RNase HII family. It depends on Mn(2+) as a cofactor. Mg(2+) serves as cofactor.

It localises to the cytoplasm. The enzyme catalyses Endonucleolytic cleavage to 5'-phosphomonoester.. Its function is as follows. Endonuclease that specifically degrades the RNA of RNA-DNA hybrids. In Synechococcus sp. (strain CC9902), this protein is Ribonuclease HII.